The following is a 144-amino-acid chain: Cytochrome c3 (144 aa).

The signal sequence occupies residues 1–24; sequence MRYLVISLFAVSLLMAGSALVGNA. Residues H51, H54, C59, C62, H63, H64, C76, C81, H82, H100, C108, C111, H112, C125, C128, and H129 each contribute to the heme c site.

This sequence belongs to the cytochrome c family. As to quaternary structure, homodimer. Heterotrimer of cytochrome c3 FDH2C and formate dehydrogenase FDH2 alpha and beta subunits that forms the FdhABC(3) complex. Binds 4 heme c groups per subunit.

The protein localises to the periplasm. Participates in sulfate respiration coupled with phosphorylation by transferring electrons from the enzyme dehydrogenase to ferredoxin. Gamma chain of the formate dehydrogenase (FDH) that catalyzes the reversible two-electron oxidation of formate to carbon dioxide. The gamma subunit of formate dehydrogenase forms a c-type heme. The polypeptide is Cytochrome c3 (Nitratidesulfovibrio vulgaris (strain ATCC 29579 / DSM 644 / CCUG 34227 / NCIMB 8303 / VKM B-1760 / Hildenborough) (Desulfovibrio vulgaris)).